We begin with the raw amino-acid sequence, 291 residues long: S-methyl-5'-thioadenosine phosphorylase (291 aa).

Residues serine 12, 54–55, and 87–88 contribute to the phosphate site; these read RH and SA. Methionine 185 contacts substrate. Residue threonine 186 participates in phosphate binding. 209 to 211 contacts substrate; sequence DFD.

The protein belongs to the PNP/MTAP phosphorylase family. MTAP subfamily. Homohexamer. Dimer of a homotrimer.

The enzyme catalyses S-methyl-5'-thioadenosine + phosphate = 5-(methylsulfanyl)-alpha-D-ribose 1-phosphate + adenine. The protein operates within amino-acid biosynthesis; L-methionine biosynthesis via salvage pathway; S-methyl-5-thio-alpha-D-ribose 1-phosphate from S-methyl-5'-thioadenosine (phosphorylase route): step 1/1. In terms of biological role, catalyzes the reversible phosphorylation of S-methyl-5'-thioadenosine (MTA) to adenine and 5-methylthioribose-1-phosphate. Involved in the breakdown of MTA, a major by-product of polyamine biosynthesis. Responsible for the first step in the methionine salvage pathway after MTA has been generated from S-adenosylmethionine. Has broad substrate specificity with 6-aminopurine nucleosides as preferred substrates. The polypeptide is S-methyl-5'-thioadenosine phosphorylase (Bradyrhizobium diazoefficiens (strain JCM 10833 / BCRC 13528 / IAM 13628 / NBRC 14792 / USDA 110)).